Consider the following 421-residue polypeptide: ATP-dependent RNA helicase RhlB (421 aa).

Residues 9 to 37 (QKFSDFALHPKVVEVLEKKGFHNCTPIQA) carry the Q motif motif. The 180-residue stretch at 40–219 (LPLTLAGRDV…FEQMNNAEYI (180 aa)) folds into the Helicase ATP-binding domain. 53-60 (AQTGTGKT) is a binding site for ATP. A DEAD box motif is present at residues 165-168 (DEAD). A Helicase C-terminal domain is found at 245 to 390 (RLLQTLIEEE…VSKYNPDALM (146 aa)). Residues 392–421 (DLPKPLRLTRPRTGNGPRRTGAPRNRRRSG) are disordered. The segment covering 402 to 414 (PRTGNGPRRTGAP) has biased composition (low complexity).

This sequence belongs to the DEAD box helicase family. RhlB subfamily. In terms of assembly, component of the RNA degradosome, which is a multiprotein complex involved in RNA processing and mRNA degradation.

The protein localises to the cytoplasm. The enzyme catalyses ATP + H2O = ADP + phosphate + H(+). DEAD-box RNA helicase involved in RNA degradation. Has RNA-dependent ATPase activity and unwinds double-stranded RNA. This Shigella boydii serotype 18 (strain CDC 3083-94 / BS512) protein is ATP-dependent RNA helicase RhlB.